A 61-amino-acid polypeptide reads, in one-letter code: Putative antitoxin APE_0472b.1 (61 aa).

This sequence belongs to the UPF0165 family.

Its function is as follows. Possibly the antitoxin component of a type II toxin-antitoxin (TA) system. The chain is Putative antitoxin APE_0472b.1 from Aeropyrum pernix (strain ATCC 700893 / DSM 11879 / JCM 9820 / NBRC 100138 / K1).